The sequence spans 411 residues: Na(+)/H(+) antiporter NhaA 2 (411 aa).

10 consecutive transmembrane segments (helical) span residues 18–38 (VGGSILLIAAAIALVWANSPV), 59–79 (LTVGTWAQDGLLAVFFFVAGL), 97–117 (LLPIIAACGGVVVPAIIAATI), 127–147 (GWAIPVATDIAFALGVLALTG), 167–187 (LLAIVLIAVLFTSSIALLWLL), 218–238 (WYCMHDAGIHATLAGVALGLL), 261–281 (PLSAGVCVPVFALFASGVALS), 297–317 (VIAGLLVGKTVGIFGISWLAI), 338–358 (VLGAIGFTVSLLVADLALAGI), and 366–386 (IAKVAVLVTSLTASLIGSALL).

The protein belongs to the NhaA Na(+)/H(+) (TC 2.A.33) antiporter family.

It localises to the cell membrane. It catalyses the reaction Na(+)(in) + 2 H(+)(out) = Na(+)(out) + 2 H(+)(in). Na(+)/H(+) antiporter that extrudes sodium in exchange for external protons. This Rhodococcus jostii (strain RHA1) protein is Na(+)/H(+) antiporter NhaA 2.